We begin with the raw amino-acid sequence, 886 residues long: Pyruvate dehydrogenase E1 component (886 aa).

As to quaternary structure, homodimer. Part of the PDH complex, consisting of multiple copies of pyruvate dehydrogenase (E1), dihydrolipoamide acetyltransferase (E2) and lipoamide dehydrogenase (E3). Requires thiamine diphosphate as cofactor.

It catalyses the reaction N(6)-[(R)-lipoyl]-L-lysyl-[protein] + pyruvate + H(+) = N(6)-[(R)-S(8)-acetyldihydrolipoyl]-L-lysyl-[protein] + CO2. Its function is as follows. Component of the pyruvate dehydrogenase (PDH) complex, that catalyzes the overall conversion of pyruvate to acetyl-CoA and CO(2). This Haemophilus influenzae (strain ATCC 51907 / DSM 11121 / KW20 / Rd) protein is Pyruvate dehydrogenase E1 component (aceE).